The chain runs to 151 residues: 6,7-dimethyl-8-ribityllumazine synthase (151 aa).

Residues F15, 49–51, and 73–75 each bind 5-amino-6-(D-ribitylamino)uracil; these read AVE and AVI. 78–79 contacts (2S)-2-hydroxy-3-oxobutyl phosphate; it reads ET. Catalysis depends on H81, which acts as the Proton donor. Residue F106 coordinates 5-amino-6-(D-ribitylamino)uracil. Position 120 (R120) interacts with (2S)-2-hydroxy-3-oxobutyl phosphate.

Belongs to the DMRL synthase family. Forms an icosahedral capsid composed of 60 subunits, arranged as a dodecamer of pentamers.

The catalysed reaction is (2S)-2-hydroxy-3-oxobutyl phosphate + 5-amino-6-(D-ribitylamino)uracil = 6,7-dimethyl-8-(1-D-ribityl)lumazine + phosphate + 2 H2O + H(+). Its pathway is cofactor biosynthesis; riboflavin biosynthesis; riboflavin from 2-hydroxy-3-oxobutyl phosphate and 5-amino-6-(D-ribitylamino)uracil: step 1/2. Catalyzes the formation of 6,7-dimethyl-8-ribityllumazine by condensation of 5-amino-6-(D-ribitylamino)uracil with 3,4-dihydroxy-2-butanone 4-phosphate. This is the penultimate step in the biosynthesis of riboflavin. This is 6,7-dimethyl-8-ribityllumazine synthase from Coxiella burnetii (strain Dugway 5J108-111).